The chain runs to 209 residues: Protease (209 aa).

Residues His-55, Asp-72, and Cys-123 contribute to the active site.

This sequence belongs to the peptidase C5 family. Interacts with protease cofactor pVI-C; this interaction is necessary for protease activation.

Its subcellular location is the virion. The protein resides in the host nucleus. It carries out the reaction Cleaves proteins of the adenovirus and its host cell at two consensus sites: -Yaa-Xaa-Gly-Gly-|-Xaa- and -Yaa-Xaa-Gly-Xaa-|-Gly- (in which Yaa is Met, Ile or Leu, and Xaa is any amino acid).. With respect to regulation, requires DNA and protease cofactor for maximal activation. Inside nascent virions, becomes partially activated by binding to the viral DNA, allowing it to cleave the cofactor that binds to the protease and fully activates it. Actin, like the viral protease cofactor, seems to act as a cofactor in the cleavage of cytokeratin 18 and of actin itself. In terms of biological role, cleaves viral precursor proteins (pTP, pIIIa, pVI, pVII, pVIII, and pX) inside newly assembled particles giving rise to mature virions. Protease complexed to its cofactor slides along the viral DNA to specifically locate and cleave the viral precursors. Mature virions have a weakened organization compared to the unmature virions, thereby facilitating subsequent uncoating. Without maturation, the particle lacks infectivity and is unable to uncoat. Late in adenovirus infection, in the cytoplasm, may participate in the cytoskeleton destruction. Cleaves host cell cytoskeletal keratins K7 and K18. The protein is Protease of Human adenovirus D serotype 9 (HAdV-9).